A 341-amino-acid chain; its full sequence is Glucokinase (341 aa).

18-23 (GDIGGT) contributes to the ATP binding site.

The protein belongs to the bacterial glucokinase family.

It is found in the cytoplasm. The enzyme catalyses D-glucose + ATP = D-glucose 6-phosphate + ADP + H(+). The chain is Glucokinase from Rhizobium leguminosarum bv. trifolii (strain WSM2304).